A 133-amino-acid chain; its full sequence is Small ribosomal subunit protein eS8 (133 aa).

Positions methionine 1 to aspartate 22 are disordered.

The protein belongs to the eukaryotic ribosomal protein eS8 family. As to quaternary structure, part of the 30S ribosomal subunit.

The sequence is that of Small ribosomal subunit protein eS8 from Saccharolobus islandicus (strain Y.N.15.51 / Yellowstone #2) (Sulfolobus islandicus).